The chain runs to 397 residues: Acetate kinase (397 aa).

Asn7 lines the Mg(2+) pocket. Position 14 (Lys14) interacts with ATP. Arg91 provides a ligand contact to substrate. Asp147 acts as the Proton donor/acceptor in catalysis. ATP is bound by residues 207–211 (HLGNG), 282–284 (DFR), and 330–334 (GLGEN). Glu383 contacts Mg(2+).

It belongs to the acetokinase family. As to quaternary structure, homodimer. It depends on Mg(2+) as a cofactor. Mn(2+) serves as cofactor.

Its subcellular location is the cytoplasm. It carries out the reaction acetate + ATP = acetyl phosphate + ADP. Its pathway is metabolic intermediate biosynthesis; acetyl-CoA biosynthesis; acetyl-CoA from acetate: step 1/2. Its function is as follows. Catalyzes the formation of acetyl phosphate from acetate and ATP. Can also catalyze the reverse reaction. The protein is Acetate kinase of Moorella thermoacetica (strain ATCC 39073 / JCM 9320).